The primary structure comprises 602 residues: Elongation factor 4 (602 aa).

The region spanning 6–188 (DRIRNFCIIA…RIVRDVPPPG (183 aa)) is the tr-type G domain. GTP-binding positions include 18–23 (DHGKST) and 135–138 (NKID).

It belongs to the TRAFAC class translation factor GTPase superfamily. Classic translation factor GTPase family. LepA subfamily.

It localises to the cell membrane. It catalyses the reaction GTP + H2O = GDP + phosphate + H(+). In terms of biological role, required for accurate and efficient protein synthesis under certain stress conditions. May act as a fidelity factor of the translation reaction, by catalyzing a one-codon backward translocation of tRNAs on improperly translocated ribosomes. Back-translocation proceeds from a post-translocation (POST) complex to a pre-translocation (PRE) complex, thus giving elongation factor G a second chance to translocate the tRNAs correctly. Binds to ribosomes in a GTP-dependent manner. This Desulforudis audaxviator (strain MP104C) protein is Elongation factor 4.